A 947-amino-acid polypeptide reads, in one-letter code: Transcriptional regulator WAR1 (947 aa).

The span at 1 to 10 (MSDTTPEKGS) shows a compositional bias: basic and acidic residues. The disordered stretch occupies residues 1 to 52 (MSDTTPEKGSVDSVSPSASNGSNTNNPLNNSSPQPLKSNESDKKPKVTRRSV). Positions 19–38 (SNGSNTNNPLNNSSPQPLKS) are enriched in low complexity. The segment at residues 54 to 86 (CKSCHSLKVKCTPSDPNNPSAPCVRCINANRIC) is a DNA-binding region (zn(2)-C6 fungal-type). Residues 96–222 (RRKKSEILEA…SPTSKDDEIN (127 aa)) form a disordered region. Over residues 129-142 (NSSENYSSSINNAN) the composition is skewed to low complexity. Polar residues-rich tracts occupy residues 143 to 158 (DSSLTSRYQSPMTFDP) and 167 to 185 (QASSAVPPISSNLNPQSAA).

As to quaternary structure, homodimer.

The protein localises to the nucleus. In terms of biological role, transcription factor required for yeast cell adherence to silicone substrate. Plays a role in resistance to weak organic acids such as acetate and sorbate. Binds in vitro to a nitric oxide-responsive element (NORE) but seems not to be involved in response to nitrosative stress. This Candida albicans (strain SC5314 / ATCC MYA-2876) (Yeast) protein is Transcriptional regulator WAR1 (WAR1).